The primary structure comprises 619 residues: Alpha-(1,6)-fucosyltransferase (619 aa).

The Cytoplasmic portion of the chain corresponds to 1–17; it reads MLLVRQLFGASANSWAR. A helical; Signal-anchor for type II membrane protein membrane pass occupies residues 18–38; the sequence is ALIIFVLAWIGLVYVFVVKLT. The Lumenal segment spans residues 39–619; the sequence is NTQGQQAAGE…TAKLPLYAGI (581 aa). 3 disulfides stabilise this stretch: Cys-253–Cys-315, Cys-261–Cys-279, and Cys-267–Cys-271. One can recognise a GT23 domain in the interval 255–539; sequence NARKLVCKLN…PDAAHRFKSL (285 aa). The SH3-binding motif lies at 345–351; that stretch reads PRPPYLP. Residues 411–412 are important for donor substrate binding; it reads RR. An intrachain disulfide couples Cys-511 to Cys-518. The SH3 domain occupies 548–609; it reads QNAHNRRVVI…PSFKVEEKVD (62 aa).

Belongs to the glycosyltransferase 23 family. The cofactor is Mn(2+). Mg(2+) serves as cofactor.

It localises to the golgi apparatus. The protein resides in the golgi stack membrane. It catalyses the reaction N(4)-{beta-D-GlcNAc-(1-&gt;2)-alpha-D-Man-(1-&gt;3)-[beta-D-GlcNAc-(1-&gt;2)-alpha-D-Man-(1-&gt;6)]-beta-D-Man-(1-&gt;4)-beta-D-GlcNAc-(1-&gt;4)-beta-D-GlcNAc}-L-asparaginyl-[protein] + GDP-beta-L-fucose = an N(4)-{beta-D-GlcNAc-(1-&gt;2)-alpha-D-Man-(1-&gt;3)-[beta-D-GlcNAc-(1-&gt;2)-alpha-D-Man-(1-&gt;6)]-beta-D-Man-(1-&gt;4)-beta-D-GlcNAc-(1-&gt;4)-[alpha-L-Fuc-(1-&gt;6)]-beta-D-GlcNAc}-L-asparaginyl-[protein] + GDP + H(+). It participates in protein modification; protein glycosylation. Its function is as follows. Catalyzes the addition of fucose in alpha 1-6 linkage to the first GlcNAc residue, next to the peptide chains in N-glycans. The addition is prevented if the GlcNAc residue is already fucosylated. The protein is Alpha-(1,6)-fucosyltransferase (FucT6) of Drosophila melanogaster (Fruit fly).